Reading from the N-terminus, the 161-residue chain is Large ribosomal subunit protein uL15 (161 aa).

The tract at residues 1-42 is disordered; that stretch reads MKLSDIADNAGSRKKRMRVGRGIGSGKGKQSGRGGKGQTARS. Residues 21–37 are compositionally biased toward gly residues; it reads RGIGSGKGKQSGRGGKG.

The protein belongs to the universal ribosomal protein uL15 family. In terms of assembly, part of the 50S ribosomal subunit.

Functionally, binds to the 23S rRNA. The chain is Large ribosomal subunit protein uL15 from Bradyrhizobium diazoefficiens (strain JCM 10833 / BCRC 13528 / IAM 13628 / NBRC 14792 / USDA 110).